We begin with the raw amino-acid sequence, 161 residues long: Large ribosomal subunit protein uL15 (161 aa).

The disordered stretch occupies residues 1-41 (MTKLNELAPAPGSTKGRMRVGRGPGSGKGKTAGRGVKGQKA). Gly residues predominate over residues 22-36 (RGPGSGKGKTAGRGV).

This sequence belongs to the universal ribosomal protein uL15 family. As to quaternary structure, part of the 50S ribosomal subunit.

Binds to the 23S rRNA. This chain is Large ribosomal subunit protein uL15, found in Caulobacter sp. (strain K31).